A 375-amino-acid chain; its full sequence is Alpha-1,2-galactosyltransferase (375 aa).

Over 1–2 (MR) the chain is Cytoplasmic. A helical; Signal-anchor for type II membrane protein membrane pass occupies residues 3 to 23 (FAPYLISAVVITTIILGGAWW). The Lumenal portion of the chain corresponds to 24 to 375 (TSAMDTKLQT…HIQNLLKPSS (352 aa)).

It belongs to the glycosyltransferase 34 family. In terms of processing, O-glycosylated.

It is found in the golgi apparatus membrane. Its function is as follows. Involved in the O- and N-linked oligosaccharide modification of proteins transported through the Golgi stack. This occurs in cis Golgi where the enzyme transfers galactose from UDP-galactose to a variety of mannose based acceptors. This is Alpha-1,2-galactosyltransferase (gma12) from Schizosaccharomyces pombe (strain 972 / ATCC 24843) (Fission yeast).